The chain runs to 311 residues: Aspartate carbamoyltransferase catalytic subunit (311 aa).

Residues Arg58 and Thr59 each contribute to the carbamoyl phosphate site. Lys86 serves as a coordination point for L-aspartate. Residues Arg108, His136, and Gln139 each coordinate carbamoyl phosphate. L-aspartate contacts are provided by Arg169 and Arg223. Carbamoyl phosphate-binding residues include Gly264 and Pro265.

This sequence belongs to the aspartate/ornithine carbamoyltransferase superfamily. ATCase family. In terms of assembly, heterododecamer (2C3:3R2) of six catalytic PyrB chains organized as two trimers (C3), and six regulatory PyrI chains organized as three dimers (R2).

The enzyme catalyses carbamoyl phosphate + L-aspartate = N-carbamoyl-L-aspartate + phosphate + H(+). The protein operates within pyrimidine metabolism; UMP biosynthesis via de novo pathway; (S)-dihydroorotate from bicarbonate: step 2/3. Its function is as follows. Catalyzes the condensation of carbamoyl phosphate and aspartate to form carbamoyl aspartate and inorganic phosphate, the committed step in the de novo pyrimidine nucleotide biosynthesis pathway. The sequence is that of Aspartate carbamoyltransferase catalytic subunit from Pelodictyon phaeoclathratiforme (strain DSM 5477 / BU-1).